The primary structure comprises 363 residues: MKIVVSGGGTGGHIYPALAFINEMKKRDERLDVLYIGTERGLESEIVPREGIPFQTIHITGFQRKLSMENVKTVVRFLRGTKRAKALLNEFKPDVVIGTGGYVCGPVVYAAAKLKIPTVIHEQNSVPGLTNKFLSRYVDRIAICFKEAEAFFPKNKVVFTGNPRASEVMSGNREEGLRSLGIKPNKKTVLIVGGSRGARPINDAFMSILSDVKAKPYQFVYVTGTVHYERVQEQMKSIGQPENVIVQPFIHNMPDVLSAVDLIVARAGATTLAEITALGLPSILIPSPYVTNNHQEKNAAALSKKDAAILRKESELTGDRLLEDIDDIMVTPGRLDAMKQAAKALGVPTAAEKLHMLVKEVAK.

Residues 10-12 (TGG), N124, S195, I250, and Q295 each bind UDP-N-acetyl-alpha-D-glucosamine.

This sequence belongs to the glycosyltransferase 28 family. MurG subfamily.

The protein localises to the cell membrane. The catalysed reaction is di-trans,octa-cis-undecaprenyl diphospho-N-acetyl-alpha-D-muramoyl-L-alanyl-D-glutamyl-meso-2,6-diaminopimeloyl-D-alanyl-D-alanine + UDP-N-acetyl-alpha-D-glucosamine = di-trans,octa-cis-undecaprenyl diphospho-[N-acetyl-alpha-D-glucosaminyl-(1-&gt;4)]-N-acetyl-alpha-D-muramoyl-L-alanyl-D-glutamyl-meso-2,6-diaminopimeloyl-D-alanyl-D-alanine + UDP + H(+). It participates in cell wall biogenesis; peptidoglycan biosynthesis. Cell wall formation. Catalyzes the transfer of a GlcNAc subunit on undecaprenyl-pyrophosphoryl-MurNAc-pentapeptide (lipid intermediate I) to form undecaprenyl-pyrophosphoryl-MurNAc-(pentapeptide)GlcNAc (lipid intermediate II). The sequence is that of UDP-N-acetylglucosamine--N-acetylmuramyl-(pentapeptide) pyrophosphoryl-undecaprenol N-acetylglucosamine transferase from Halalkalibacterium halodurans (strain ATCC BAA-125 / DSM 18197 / FERM 7344 / JCM 9153 / C-125) (Bacillus halodurans).